We begin with the raw amino-acid sequence, 470 residues long: Heparan-sulfate 6-O-sulfotransferase 3 (470 aa).

Over 1-4 the chain is Cytoplasmic; sequence MDER. Residues 5–27 traverse the membrane as a helical; Signal-anchor for type II membrane protein segment; it reads FNKWLLTPVLTLLFVVIMYQYVS. The Lumenal portion of the chain corresponds to 28–470; it reads PSCTSSCTNF…EDYNSQVVRW (443 aa). A disordered region spans residues 36–121; it reads NFGEQLRSGE…EAPENGSLPR (86 aa). The span at 88 to 113 shows a compositional bias: acidic residues; sequence PEDEDEDPGDPEEEEEEEEEEPDPEA. 2 N-linked (GlcNAc...) asparagine glycosylation sites follow: Asn-116 and Asn-127. 151-159 provides a ligand contact to 3'-phosphoadenylyl sulfate; that stretch reads HIQKTGGTT. Substrate-binding positions include 181 to 182, Arg-198, Trp-203, and His-208; that span reads KK. His-208 functions as the Proton acceptor in the catalytic mechanism. Asn-230 is a glycosylation site (N-linked (GlcNAc...) asparagine). Arg-244 and Ser-252 together coordinate 3'-phosphoadenylyl sulfate. Positions 256 and 263 each coordinate substrate. N-linked (GlcNAc...) asparagine glycans are attached at residues Asn-323 and Asn-328. Position 376–378 (376–378) interacts with 3'-phosphoadenylyl sulfate; the sequence is TQF. Asn-379 carries N-linked (GlcNAc...) asparagine glycosylation. 382–383 serves as a coordination point for 3'-phosphoadenylyl sulfate; that stretch reads RA. The disordered stretch occupies residues 421 to 453; the sequence is TKQLEHQRDRQKRREERRLQREHRAHRWPKEDR. Over residues 422 to 439 the composition is skewed to basic and acidic residues; that stretch reads KQLEHQRDRQKRREERRL.

The protein belongs to the sulfotransferase 6 family. As to expression, ubiquitously expressed.

Its subcellular location is the membrane. It carries out the reaction alpha-D-glucosaminyl-[heparan sulfate](n) + 3'-phosphoadenylyl sulfate = 6-sulfo-alpha-D-glucosaminyl-[heparan sulfate](n) + adenosine 3',5'-bisphosphate + H(+). Functionally, 6-O-sulfation enzyme which catalyzes the transfer of sulfate from 3'-phosphoadenosine 5'-phosphosulfate (PAPS) to position 6 of the N-sulfoglucosamine residue (GlcNS) of heparan sulfate. This Mus musculus (Mouse) protein is Heparan-sulfate 6-O-sulfotransferase 3 (Hs6st3).